A 288-amino-acid chain; its full sequence is UDP-3-O-acyl-N-acetylglucosamine deacetylase (288 aa).

Residues histidine 79, histidine 236, and aspartate 240 each contribute to the Zn(2+) site. The active-site Proton donor is the histidine 263.

Belongs to the LpxC family. Zn(2+) serves as cofactor.

It catalyses the reaction a UDP-3-O-[(3R)-3-hydroxyacyl]-N-acetyl-alpha-D-glucosamine + H2O = a UDP-3-O-[(3R)-3-hydroxyacyl]-alpha-D-glucosamine + acetate. It participates in glycolipid biosynthesis; lipid IV(A) biosynthesis; lipid IV(A) from (3R)-3-hydroxytetradecanoyl-[acyl-carrier-protein] and UDP-N-acetyl-alpha-D-glucosamine: step 2/6. Its function is as follows. Catalyzes the hydrolysis of UDP-3-O-myristoyl-N-acetylglucosamine to form UDP-3-O-myristoylglucosamine and acetate, the committed step in lipid A biosynthesis. In Rickettsia felis (strain ATCC VR-1525 / URRWXCal2) (Rickettsia azadi), this protein is UDP-3-O-acyl-N-acetylglucosamine deacetylase.